Reading from the N-terminus, the 232-residue chain is MALVLQLLPLLLSKVQGNPEVSLEGNPGDRVNLSCIGVSDPTRWAWAPSFPACKGLSKGRRPILWASSSGTPTVLQHFSGRLRSLDTGIKRLELLLSAGDSGTFFCKGRQENESRTVIQVLGDKAGCRPSGSTHGSEYSKVLIPLLGFGLVLGLGALGLVWWRRSCVPPSHIAPVINAEPQRPLEQDSKISGHLDQEPNLHYADLDHSVLRRHRRMSALVPGDASTVYAVVV.

Residues 1-17 form the signal peptide; sequence MALVLQLLPLLLSKVQG. Residues 18 to 140 lie on the Extracellular side of the membrane; sequence NPEVSLEGNP…GSTHGSEYSK (123 aa). 2 N-linked (GlcNAc...) asparagine glycosylation sites follow: Asn32 and Asn112. A helical transmembrane segment spans residues 141–161; the sequence is VLIPLLGFGLVLGLGALGLVW. Residues 162–232 lie on the Cytoplasmic side of the membrane; that stretch reads WRRSCVPPSH…DASTVYAVVV (71 aa). 2 consecutive short sequence motifs (ITIM motif) follow at residues 200 to 205 and 226 to 231; these read LHYADL and TVYAVV. Tyr202 is modified (phosphotyrosine).

As to quaternary structure, interacts (via ITIM motif) with PTPN6 and PTPN11. Binds to heparin. Post-translationally, N-glycosylated. May be O-glycosylated. In terms of processing, phosphorylated.

It localises to the cell membrane. In terms of biological role, inhibitory receptor that acts as a critical regulator of hematopoietic lineage differentiation, megakaryocyte function and platelet production. Inhibits platelet aggregation and activation by agonists such as ADP and collagen-related peptide. This regulation of megakaryocate function as well as platelet production ann activation is done through the inhibition (via the 2 ITIM motifs) of the receptors CLEC1B and GP6:FcRgamma signaling. Appears to operate in a calcium-independent manner. The sequence is that of Megakaryocyte and platelet inhibitory receptor G6b from Rattus norvegicus (Rat).